An 891-amino-acid polypeptide reads, in one-letter code: DNA polymerase I (891 aa).

Residues 1–313 (MEQPVIKEGT…LLDNTPALDN (313 aa)) form the 5'-3' exonuclease domain. One can recognise a 3'-5' exonuclease domain in the interval 314–488 (TPKKSCMIVL…RLCEYFEKGG (175 aa)). A polymerase region spans residues 492-890 (NLLSLAREIE…FIAKRWNELK (399 aa)).

This sequence belongs to the DNA polymerase type-A family. As to quaternary structure, single-chain monomer with multiple functions.

The catalysed reaction is DNA(n) + a 2'-deoxyribonucleoside 5'-triphosphate = DNA(n+1) + diphosphate. In addition to polymerase activity, this DNA polymerase exhibits 3'-5' and 5'-3' exonuclease activity. This chain is DNA polymerase I (polA), found in Helicobacter pylori (strain ATCC 700392 / 26695) (Campylobacter pylori).